The chain runs to 570 residues: Periplasmic trehalase (570 aa).

The N-terminal stretch at 1 to 34 is a signal peptide; it reads MIPPEIRRSVLLQKAIKLALAGTLLTFASFSATA. Substrate is bound by residues arginine 159, 166-167, asparagine 203, 212-214, 284-286, and glycine 317; these read WD, RSQ, and RPE. Active-site proton donor/acceptor residues include aspartate 319 and glutamate 503. Glutamate 518 contacts substrate. Residues 544–570 are disordered; sequence KPCDSVPSTRPASLSATPTKTPSAATQ. Residues 554–570 are compositionally biased toward low complexity; sequence PASLSATPTKTPSAATQ.

This sequence belongs to the glycosyl hydrolase 37 family. As to quaternary structure, monomer.

The protein resides in the periplasm. The catalysed reaction is alpha,alpha-trehalose + H2O = alpha-D-glucose + beta-D-glucose. Functionally, provides the cells with the ability to utilize trehalose at high osmolarity by splitting it into glucose molecules that can subsequently be taken up by the phosphotransferase-mediated uptake system. The chain is Periplasmic trehalase from Salmonella paratyphi A (strain AKU_12601).